The chain runs to 254 residues: tRNA pseudouridine synthase A (254 aa).

Catalysis depends on D52, which acts as the Nucleophile. Y111 contributes to the substrate binding site.

This sequence belongs to the tRNA pseudouridine synthase TruA family. As to quaternary structure, homodimer.

The catalysed reaction is uridine(38/39/40) in tRNA = pseudouridine(38/39/40) in tRNA. Formation of pseudouridine at positions 38, 39 and 40 in the anticodon stem and loop of transfer RNAs. This Methylobacterium nodulans (strain LMG 21967 / CNCM I-2342 / ORS 2060) protein is tRNA pseudouridine synthase A.